A 471-amino-acid polypeptide reads, in one-letter code: Glutamate--tRNA ligase (471 aa).

A 'HIGH' region motif is present at residues 10-20; the sequence is PSPTGFLHIGG. Residues 117 to 137 form a disordered region; that stretch reads GRPPRYDGRWRDRPASERPTD. Residues 239 to 243 carry the 'KMSKS' region motif; that stretch reads KLSKR. Lysine 242 provides a ligand contact to ATP.

It belongs to the class-I aminoacyl-tRNA synthetase family. Glutamate--tRNA ligase type 1 subfamily. As to quaternary structure, monomer.

The protein localises to the cytoplasm. It carries out the reaction tRNA(Glu) + L-glutamate + ATP = L-glutamyl-tRNA(Glu) + AMP + diphosphate. In terms of biological role, catalyzes the attachment of glutamate to tRNA(Glu) in a two-step reaction: glutamate is first activated by ATP to form Glu-AMP and then transferred to the acceptor end of tRNA(Glu). The chain is Glutamate--tRNA ligase from Azorhizobium caulinodans (strain ATCC 43989 / DSM 5975 / JCM 20966 / LMG 6465 / NBRC 14845 / NCIMB 13405 / ORS 571).